The primary structure comprises 466 residues: Adenosylhomocysteinase (466 aa).

Substrate is bound by residues T57, D132, and E192. 193 to 195 (TTT) serves as a coordination point for NAD(+). Substrate-binding residues include K222 and D226. NAD(+) is bound by residues N227, 256–261 (GYGDVG), E279, N314, 335–337 (IGH), and N380.

This sequence belongs to the adenosylhomocysteinase family. It depends on NAD(+) as a cofactor.

The protein resides in the cytoplasm. It catalyses the reaction S-adenosyl-L-homocysteine + H2O = L-homocysteine + adenosine. The protein operates within amino-acid biosynthesis; L-homocysteine biosynthesis; L-homocysteine from S-adenosyl-L-homocysteine: step 1/1. Functionally, may play a key role in the regulation of the intracellular concentration of adenosylhomocysteine. This chain is Adenosylhomocysteinase, found in Rhizobium meliloti (strain 1021) (Ensifer meliloti).